Here is an 802-residue protein sequence, read N- to C-terminus: Endoplasmin (802 aa).

Positions Met1–Ala21 are cleaved as a signal peptide. An SRT pseudosubstrate motif motif is present at residues Ser42–Thr44. Asn62 carries N-linked (GlcNAc...) asparagine glycosylation. Ser64 is modified (phosphoserine). Asn107 is a glycosylation site (N-linked (GlcNAc...) asparagine). 3 residues coordinate ATP: Asn107, Asp149, and Asn162. Lys168 is modified (N6-(2-hydroxyisobutyryl)lysine). Phosphoserine is present on Ser172. Phe199 serves as a coordination point for ATP. N-linked (GlcNAc...) asparagine glycosylation occurs at Asn217. Residues Glu290–Glu317 show a composition bias toward acidic residues. Residues Glu290–Thr323 form a disordered region. Phosphoserine is present on residues Ser306 and Ser403. Lys404 carries the N6-succinyllysine modification. N-linked (GlcNAc...) asparagine glycosylation is present at Asn445. Ser447 is subject to Phosphoserine. N6-acetyllysine is present on Lys479. N-linked (GlcNAc...) asparagine glycosylation is found at Asn481 and Asn502. Lys633 carries the post-translational modification N6-succinyllysine. The disordered stretch occupies residues Ile749–Leu802. Acidic residues predominate over residues Ala753–Glu793. Thr785 carries the post-translational modification Phosphothreonine. The Prevents secretion from ER motif lies at Lys799–Leu802.

This sequence belongs to the heat shock protein 90 family. Homodimer; disulfide-linked. Component of an EIF2 complex at least composed of CELF1/CUGBP1, CALR, CALR3, EIF2S1, EIF2S2, HSP90B1 and HSPA5. Part of a large chaperone multiprotein complex comprising DNAJB11, HSP90B1, HSPA5, HYOU, PDIA2, PDIA4, PDIA6, PPIB, SDF2L1, UGGT1 and very small amounts of ERP29, but not, or at very low levels, CALR nor CANX. Hyperglycosylated form interacts with OS9; promoting its degradation by the endoplasmic reticulum associated degradation (ERAD). Interacts with AIMP1; regulates its retention in the endoplasmic reticulum. Interacts with CNPY3; this interaction is disrupted in the presence of ATP. Interacts with TLR4, TLR9 and TLR11, but not with TLR3. Interacts with MZB1 in a calcium-dependent manner. Interacts with METTL23. Interacts with IL1B; the interaction facilitates cargo translocation into the ERGIC. Interacts with EIF2AK3. In terms of processing, phosphorylated by CK2. Post-translationally, N-glycosylated cotranslationally at Asn-217 by STT3A-containing OST-A complex: this glycosylation is constitutive. In response to various stress, 5 additional facultative sites (Asn-62, Asn-107, Asn-445, Asn-481 and Asn-502) can be glycosylated post-translationally by STT3B-containing OST-B complex, leading to a hyperglycosylated form that is degraded by the ER-associated degradation (ERAD) pathway. In normal conditions, the OST-A complex together with CCDC134 prevent glycosylation at facultative sites during protein folding, thereby preventing hyperglycosylation. Mechanistically, nascent HSP90B1 is tethered during translation to a specialized CCDC134-containing translocon that forms a microenvironment for its folding, in which STT3A associates with the SRT pseudosubstrate motif, and prevents access to facultative glycosylation sites until folding is completed, rendering its facultative sites inaccessible to the OST-B complex.

Its subcellular location is the endoplasmic reticulum lumen. The protein localises to the sarcoplasmic reticulum lumen. The protein resides in the melanosome. It carries out the reaction ATP + H2O = ADP + phosphate + H(+). ATP-dependent chaperone involved in the processing of proteins in the endoplasmic reticulum, regulating their transport. Together with MESD, acts as a modulator of the Wnt pathway by promoting the folding of LRP6, a coreceptor of the canonical Wnt pathway. When associated with CNPY3, required for proper folding of Toll-like receptors. Promotes folding and trafficking of TLR4 to the cell surface. May participate in the unfolding of cytosolic leaderless cargos (lacking the secretion signal sequence) such as the interleukin 1/IL-1 to facilitate their translocation into the ERGIC (endoplasmic reticulum-Golgi intermediate compartment) and secretion; the translocation process is mediated by the cargo receptor TMED10. This Mus musculus (Mouse) protein is Endoplasmin (Hsp90b1).